The primary structure comprises 519 residues: Galactokinase (519 aa).

Residues arginine 47, glutamate 53, histidine 54, and aspartate 56 each contribute to the alpha-D-galactose site. Glycine 159, glycine 161, serine 163, and serine 164 together coordinate ATP. Aspartate 209 provides a ligand contact to alpha-D-galactose. The active-site Proton acceptor is aspartate 209. Residues asparagine 257 and lysine 258 each coordinate ATP. Tyrosine 266 is a binding site for alpha-D-galactose.

This sequence belongs to the GHMP kinase family. GalK subfamily.

The enzyme catalyses alpha-D-galactose + ATP = alpha-D-galactose 1-phosphate + ADP + H(+). It participates in carbohydrate metabolism; galactose metabolism. Functionally, galactokinase is a key enzyme in the galactose metabolism where it catalyzes the conversion of alpha-D-galactose to galactose 1-phosphate. Can also induce the transcription of the gal genes in response to the organism being challenged with galactose as the sole source of carbon. This chain is Galactokinase (gal1), found in Schizosaccharomyces pombe (strain 972 / ATCC 24843) (Fission yeast).